Here is a 240-residue protein sequence, read N- to C-terminus: Spore coat polysaccharide biosynthesis protein SpsF (240 aa).

It belongs to the CMP-NeuNAc synthase family.

Its pathway is spore coat biogenesis; spore coat polysaccharide biosynthesis. This Bacillus subtilis (strain 168) protein is Spore coat polysaccharide biosynthesis protein SpsF (spsF).